The primary structure comprises 151 residues: Putative pre-16S rRNA nuclease (151 aa).

Belongs to the YqgF nuclease family.

The protein resides in the cytoplasm. Its function is as follows. Could be a nuclease involved in processing of the 5'-end of pre-16S rRNA. The polypeptide is Putative pre-16S rRNA nuclease (Prochlorococcus marinus (strain MIT 9515)).